Consider the following 212-residue polypeptide: uncharacterized protein (212 aa).

Disordered regions lie at residues 1 to 25 (MARK…GRPN) and 165 to 212 (STSG…HWGG). Positions 202-212 (RSSSARGHWGG) are enriched in low complexity.

This is an uncharacterized protein from Escherichia coli (strain K12).